A 315-amino-acid chain; its full sequence is Ribosomal RNA small subunit methyltransferase H (315 aa).

Residues 35–37 (GGH), aspartate 55, phenylalanine 80, aspartate 102, and glutamine 109 contribute to the S-adenosyl-L-methionine site.

This sequence belongs to the methyltransferase superfamily. RsmH family.

The protein localises to the cytoplasm. It carries out the reaction cytidine(1402) in 16S rRNA + S-adenosyl-L-methionine = N(4)-methylcytidine(1402) in 16S rRNA + S-adenosyl-L-homocysteine + H(+). Functionally, specifically methylates the N4 position of cytidine in position 1402 (C1402) of 16S rRNA. This is Ribosomal RNA small subunit methyltransferase H from Shewanella pealeana (strain ATCC 700345 / ANG-SQ1).